The sequence spans 316 residues: Zinc finger protein 330 (316 aa).

The segment at 1 to 24 is disordered; it reads MPKKKTGARKKAENRREREKQLRA. A Nuclear localization signal motif is present at residues 3 to 11; it reads KKKTGARKK. Residues 10–22 show a composition bias toward basic and acidic residues; sequence KKAENRREREKQL. 4 consecutive C4-type zinc fingers follow at residues 42–58, 67–104, 129–149, and 175–189; these read CDKC…CYFC, CAQC…CDFC, CVEC…CSFC, and CVSC…CLRC. The tract at residues 227 to 299 is disordered; sequence SMSTRSLKFG…ESSDLFNNLN (73 aa). Over residues 268 to 291 the composition is skewed to acidic residues; that stretch reads DDDEEEDEAEDEEEEDGKDSDAES. Ser-287 is modified (phosphoserine).

It belongs to the NOA36 family.

The protein localises to the nucleus. It localises to the nucleolus. It is found in the chromosome. Its subcellular location is the centromere. The polypeptide is Zinc finger protein 330 (Znf330) (Mus musculus (Mouse)).